The chain runs to 512 residues: 2,3-bisphosphoglycerate-independent phosphoglycerate mutase (512 aa).

Mn(2+)-binding residues include D14 and S64. The Phosphoserine intermediate role is filled by S64. Substrate is bound by residues H125, 155–156 (RD), R187, R193, 259–262 (RADR), and K332. Residues D399, H403, D440, H441, and H459 each coordinate Mn(2+).

Belongs to the BPG-independent phosphoglycerate mutase family. As to quaternary structure, monomer. It depends on Mn(2+) as a cofactor.

The enzyme catalyses (2R)-2-phosphoglycerate = (2R)-3-phosphoglycerate. It functions in the pathway carbohydrate degradation; glycolysis; pyruvate from D-glyceraldehyde 3-phosphate: step 3/5. Functionally, catalyzes the interconversion of 2-phosphoglycerate and 3-phosphoglycerate. The protein is 2,3-bisphosphoglycerate-independent phosphoglycerate mutase of Ruthia magnifica subsp. Calyptogena magnifica.